The chain runs to 890 residues: Alanine--tRNA ligase (890 aa).

The Zn(2+) site is built by histidine 573, histidine 577, cysteine 676, and histidine 680.

The protein belongs to the class-II aminoacyl-tRNA synthetase family. Zn(2+) is required as a cofactor.

The protein localises to the cytoplasm. It catalyses the reaction tRNA(Ala) + L-alanine + ATP = L-alanyl-tRNA(Ala) + AMP + diphosphate. Its function is as follows. Catalyzes the attachment of alanine to tRNA(Ala) in a two-step reaction: alanine is first activated by ATP to form Ala-AMP and then transferred to the acceptor end of tRNA(Ala). Also edits incorrectly charged Ser-tRNA(Ala) and Gly-tRNA(Ala) via its editing domain. This Corynebacterium efficiens (strain DSM 44549 / YS-314 / AJ 12310 / JCM 11189 / NBRC 100395) protein is Alanine--tRNA ligase.